We begin with the raw amino-acid sequence, 311 residues long: MPRMPDSSSLFDELQDLATEQQNPHSTHIDTASVEEILRVINTEDHKVPIAVRRELPHIAEAVEIVVEAFEADGRLFYVGAGTSGRLGVVDASECPPTFGTDPERVQGIIAGGREAVFRSQEGAEDVPERGAQALKGQGVTENDVVCGIASSGRTPFVVGAVEHARDAIGCPTLFVTTIPREELDVDPDVAICPVVGPEVIMGSTRMKSGTAQKLVLNMITTAAMVRLGKVYENMMVDLRRTSEKLVERGIRTVMMVTGVDYDAADAVLTRCDGHVKTALVMILADVEVDEARRRLDATDGFVRPAIEGDE.

The 165-residue stretch at 66–230 (VVEAFEADGR…TTAAMVRLGK (165 aa)) folds into the SIS domain. The active-site Proton donor is glutamate 94. Glutamate 125 is a catalytic residue.

It belongs to the GCKR-like family. MurNAc-6-P etherase subfamily. Homodimer.

It carries out the reaction N-acetyl-D-muramate 6-phosphate + H2O = N-acetyl-D-glucosamine 6-phosphate + (R)-lactate. It participates in amino-sugar metabolism; N-acetylmuramate degradation. Functionally, specifically catalyzes the cleavage of the D-lactyl ether substituent of MurNAc 6-phosphate, producing GlcNAc 6-phosphate and D-lactate. The polypeptide is N-acetylmuramic acid 6-phosphate etherase (Salinibacter ruber (strain DSM 13855 / M31)).